We begin with the raw amino-acid sequence, 137 residues long: ATP synthase epsilon chain (137 aa).

The protein belongs to the ATPase epsilon chain family. As to quaternary structure, F-type ATPases have 2 components, CF(1) - the catalytic core - and CF(0) - the membrane proton channel. CF(1) has five subunits: alpha(3), beta(3), gamma(1), delta(1), epsilon(1). CF(0) has three main subunits: a, b and c.

It is found in the cell inner membrane. In terms of biological role, produces ATP from ADP in the presence of a proton gradient across the membrane. The polypeptide is ATP synthase epsilon chain (Magnetococcus marinus (strain ATCC BAA-1437 / JCM 17883 / MC-1)).